Reading from the N-terminus, the 171-residue chain is S-ribosylhomocysteine lyase (171 aa).

Fe cation is bound by residues His54, His58, and Cys128.

The protein belongs to the LuxS family. In terms of assembly, homodimer. It depends on Fe cation as a cofactor.

It catalyses the reaction S-(5-deoxy-D-ribos-5-yl)-L-homocysteine = (S)-4,5-dihydroxypentane-2,3-dione + L-homocysteine. In terms of biological role, involved in the synthesis of autoinducer 2 (AI-2) which is secreted by bacteria and is used to communicate both the cell density and the metabolic potential of the environment. The regulation of gene expression in response to changes in cell density is called quorum sensing. Catalyzes the transformation of S-ribosylhomocysteine (RHC) to homocysteine (HC) and 4,5-dihydroxy-2,3-pentadione (DPD). The chain is S-ribosylhomocysteine lyase from Proteus mirabilis (strain HI4320).